Here is a 540-residue protein sequence, read N- to C-terminus: GMP synthase [glutamine-hydrolyzing] (540 aa).

The Glutamine amidotransferase type-1 domain occupies 26–216; that stretch reads IIIILDFGSQ…VYHICECEPT (191 aa). The Nucleophile role is filled by cysteine 103. Active-site residues include histidine 190 and glutamate 192. A GMPS ATP-PPase domain is found at 217-415; the sequence is WTTAAFVEEA…VGLPEEIVQR (199 aa). 244-250 provides a ligand contact to ATP; the sequence is SGGVDSS.

In terms of assembly, homodimer.

The enzyme catalyses XMP + L-glutamine + ATP + H2O = GMP + L-glutamate + AMP + diphosphate + 2 H(+). It functions in the pathway purine metabolism; GMP biosynthesis; GMP from XMP (L-Gln route): step 1/1. Catalyzes the synthesis of GMP from XMP. The chain is GMP synthase [glutamine-hydrolyzing] from Trichormus variabilis (strain ATCC 29413 / PCC 7937) (Anabaena variabilis).